We begin with the raw amino-acid sequence, 228 residues long: Isoprenyl transferase (228 aa).

Residue Asp-9 is part of the active site. Asp-9 is a Mg(2+) binding site. Residues 10 to 13, Trp-14, Arg-22, His-26, and 54 to 56 each bind substrate; these read GNGR and STE. The active-site Proton acceptor is Asn-57. Residues Trp-58, Arg-60, Arg-175, and 181-183 contribute to the substrate site; that span reads RMS. Glu-194 serves as a coordination point for Mg(2+).

Belongs to the UPP synthase family. Homodimer. It depends on Mg(2+) as a cofactor.

Functionally, catalyzes the condensation of isopentenyl diphosphate (IPP) with allylic pyrophosphates generating different type of terpenoids. The polypeptide is Isoprenyl transferase (Treponema pallidum (strain Nichols)).